The following is a 93-amino-acid chain: Acylphosphatase (93 aa).

One can recognise an Acylphosphatase-like domain in the interval 6–93; it reads RARIVVSGRV…GDLGAFEIRF (88 aa). Catalysis depends on residues Arg21 and Asn39.

It belongs to the acylphosphatase family.

It carries out the reaction an acyl phosphate + H2O = a carboxylate + phosphate + H(+). The protein is Acylphosphatase (acyP) of Anaeromyxobacter dehalogenans (strain 2CP-C).